The chain runs to 240 residues: MTGKPAYKRVLLKASGEALMGSQGFGIDVSVADRIANDIKQARALGVEVGVVIGGGNIFRGVAVASKGGDRVTGDHMGMLATVINSLALRTSLHKIGVDSVVLSAIAMPEICESFSQRQATAYMDEGKVVIFAGGTGNPFFTTDSAAALRAAEIEADALLKGTQVDGIYSADPKKDPGATRFDQLTHKEVLDRGLAVMDTAAVALARENNIPIIVYSIHENGGLADILQGKGRCTIVSDN.

An ATP-binding site is contributed by 13–16 (KASG). The interval 21–26 (GSQGFG) is involved in allosteric activation by GTP. Glycine 55 contacts UMP. Positions 56 and 60 each coordinate ATP. Residues aspartate 75 and 136–143 (TGNPFFTT) contribute to the UMP site. ATP-binding residues include threonine 163, glutamine 164, tyrosine 169, and aspartate 172.

The protein belongs to the UMP kinase family. As to quaternary structure, homohexamer.

It is found in the cytoplasm. The catalysed reaction is UMP + ATP = UDP + ADP. The protein operates within pyrimidine metabolism; CTP biosynthesis via de novo pathway; UDP from UMP (UMPK route): step 1/1. Its activity is regulated as follows. Allosterically activated by GTP. Inhibited by UTP. Its function is as follows. Catalyzes the reversible phosphorylation of UMP to UDP. This is Uridylate kinase from Brucella abortus biovar 1 (strain 9-941).